The following is a 419-amino-acid chain: UDP-N-acetylglucosamine 1-carboxyvinyltransferase (419 aa).

22–23 (KN) serves as a coordination point for phosphoenolpyruvate. Arg-92 provides a ligand contact to UDP-N-acetyl-alpha-D-glucosamine. Cys-116 serves as the catalytic Proton donor. 2-(S-cysteinyl)pyruvic acid O-phosphothioketal is present on Cys-116. UDP-N-acetyl-alpha-D-glucosamine is bound by residues Asp-306 and Ile-328.

The protein belongs to the EPSP synthase family. MurA subfamily.

The protein localises to the cytoplasm. The catalysed reaction is phosphoenolpyruvate + UDP-N-acetyl-alpha-D-glucosamine = UDP-N-acetyl-3-O-(1-carboxyvinyl)-alpha-D-glucosamine + phosphate. Its pathway is cell wall biogenesis; peptidoglycan biosynthesis. Functionally, cell wall formation. Adds enolpyruvyl to UDP-N-acetylglucosamine. The polypeptide is UDP-N-acetylglucosamine 1-carboxyvinyltransferase (Pseudoalteromonas translucida (strain TAC 125)).